The chain runs to 355 residues: Protein RecA (355 aa).

67 to 74 contacts ATP; that stretch reads GPESSGKT.

This sequence belongs to the RecA family.

It is found in the cytoplasm. In terms of biological role, can catalyze the hydrolysis of ATP in the presence of single-stranded DNA, the ATP-dependent uptake of single-stranded DNA by duplex DNA, and the ATP-dependent hybridization of homologous single-stranded DNAs. It interacts with LexA causing its activation and leading to its autocatalytic cleavage. This Histophilus somni (strain 129Pt) (Haemophilus somnus) protein is Protein RecA.